A 106-amino-acid chain; its full sequence is Large ribosomal subunit protein uL24 (106 aa).

It belongs to the universal ribosomal protein uL24 family. As to quaternary structure, part of the 50S ribosomal subunit.

Its function is as follows. One of two assembly initiator proteins, it binds directly to the 5'-end of the 23S rRNA, where it nucleates assembly of the 50S subunit. In terms of biological role, one of the proteins that surrounds the polypeptide exit tunnel on the outside of the subunit. The polypeptide is Large ribosomal subunit protein uL24 (Bordetella petrii (strain ATCC BAA-461 / DSM 12804 / CCUG 43448)).